A 216-amino-acid polypeptide reads, in one-letter code: Ras-related protein Rab-5C (216 aa).

Residues S30, A31, G33, K34, S35, S36, H47, E48, T53, and G79 each contribute to the GTP site. S35 lines the Mg(2+) pocket. 2 consecutive short sequence motifs (switch) follow at residues Q45 to A57 and A78 to A94. T53 lines the Mg(2+) pocket. A Phosphoserine modification is found at S85. Residues N134, K135, D137, A165, and K166 each contribute to the GTP site. The disordered stretch occupies residues N185–N216. Over residues Q203–N216 the composition is skewed to polar residues. Residues C213 and C214 are each lipidated (S-geranylgeranyl cysteine).

This sequence belongs to the small GTPase superfamily. Rab family. As to quaternary structure, interacts with EEA1 and INCA1. Interacts with GDI1, GDI2, CHML and CHM; phosphorylation at Ser-85 disrupts this interaction. It depends on Mg(2+) as a cofactor. Phosphorylation of Ser-85 in the switch II region by LRRK2 prevents the association of RAB regulatory proteins, including CHM, CHML and RAB GDP dissociation inhibitors GDI1 and GDI2.

It localises to the cell membrane. It is found in the early endosome membrane. The protein resides in the melanosome. The enzyme catalyses GTP + H2O = GDP + phosphate + H(+). Regulated by guanine nucleotide exchange factors (GEFs) which promote the exchange of bound GDP for free GTP. Regulated by GTPase activating proteins (GAPs) which increase the GTP hydrolysis activity. Inhibited by GDP dissociation inhibitors (GDIs). In terms of biological role, the small GTPases Rab are key regulators of intracellular membrane trafficking, from the formation of transport vesicles to their fusion with membranes. Rabs cycle between an inactive GDP-bound form and an active GTP-bound form that is able to recruit to membranes different sets of downstream effectors directly responsible for vesicle formation, movement, tethering and fusion. The polypeptide is Ras-related protein Rab-5C (Mus musculus (Mouse)).